The sequence spans 292 residues: Homoserine kinase (292 aa).

ATP is bound at residue Pro84 to Ala94.

It belongs to the GHMP kinase family. Homoserine kinase subfamily.

The protein localises to the cytoplasm. It carries out the reaction L-homoserine + ATP = O-phospho-L-homoserine + ADP + H(+). It functions in the pathway amino-acid biosynthesis; L-threonine biosynthesis; L-threonine from L-aspartate: step 4/5. Functionally, catalyzes the ATP-dependent phosphorylation of L-homoserine to L-homoserine phosphate. This chain is Homoserine kinase, found in Campylobacter jejuni subsp. doylei (strain ATCC BAA-1458 / RM4099 / 269.97).